The primary structure comprises 101 residues: NAD(P)H-quinone oxidoreductase subunit 4L, chloroplastic (101 aa).

The next 3 helical transmembrane spans lie at 2-22 (MLEYVLGLSAYLFSIGIYGLI), 32-52 (MCLELILNAVNINFVTFSDFF), and 61-81 (IFSIFVISIAAAEAAIGPAIV).

It belongs to the complex I subunit 4L family. In terms of assembly, NDH is composed of at least 16 different subunits, 5 of which are encoded in the nucleus.

The protein resides in the plastid. Its subcellular location is the chloroplast thylakoid membrane. The catalysed reaction is a plastoquinone + NADH + (n+1) H(+)(in) = a plastoquinol + NAD(+) + n H(+)(out). It carries out the reaction a plastoquinone + NADPH + (n+1) H(+)(in) = a plastoquinol + NADP(+) + n H(+)(out). Functionally, NDH shuttles electrons from NAD(P)H:plastoquinone, via FMN and iron-sulfur (Fe-S) centers, to quinones in the photosynthetic chain and possibly in a chloroplast respiratory chain. The immediate electron acceptor for the enzyme in this species is believed to be plastoquinone. Couples the redox reaction to proton translocation, and thus conserves the redox energy in a proton gradient. The protein is NAD(P)H-quinone oxidoreductase subunit 4L, chloroplastic of Populus trichocarpa (Western balsam poplar).